A 474-amino-acid chain; its full sequence is UDP-glycosyltransferase 71C2 (474 aa).

Residues serine 293, 352–354, 369–377, and 391–394 contribute to the UDP-alpha-D-glucose site; these read APQ, HCGWNSILE, and YAEQ.

Belongs to the UDP-glycosyltransferase family.

Possesses low quercetin 3-O-glucosyltransferase, 7-O-glucosyltransferase and 3'-O-glucosyltransferase activities in vitro. Glucosylates other secondary metabolites in vitro like vanillin, trans-resveratrol, curumin and etoposide. The chain is UDP-glycosyltransferase 71C2 (UGT71C2) from Arabidopsis thaliana (Mouse-ear cress).